Reading from the N-terminus, the 488-residue chain is Probable glycine dehydrogenase (decarboxylating) subunit 2 (488 aa).

Residue lysine 273 is modified to N6-(pyridoxal phosphate)lysine.

This sequence belongs to the GcvP family. C-terminal subunit subfamily. In terms of assembly, the glycine cleavage system is composed of four proteins: P, T, L and H. In this organism, the P 'protein' is a heterodimer of two subunits. Pyridoxal 5'-phosphate is required as a cofactor.

It catalyses the reaction N(6)-[(R)-lipoyl]-L-lysyl-[glycine-cleavage complex H protein] + glycine + H(+) = N(6)-[(R)-S(8)-aminomethyldihydrolipoyl]-L-lysyl-[glycine-cleavage complex H protein] + CO2. Functionally, the glycine cleavage system catalyzes the degradation of glycine. The P protein binds the alpha-amino group of glycine through its pyridoxal phosphate cofactor; CO(2) is released and the remaining methylamine moiety is then transferred to the lipoamide cofactor of the H protein. This is Probable glycine dehydrogenase (decarboxylating) subunit 2 from Halalkalibacterium halodurans (strain ATCC BAA-125 / DSM 18197 / FERM 7344 / JCM 9153 / C-125) (Bacillus halodurans).